Reading from the N-terminus, the 1057-residue chain is MSSQQFPRLGTPSPGLSQPPSQIASSGSAGLINQVATVNDEAGRDADVGTREHVGPSSSLPPREEKQEPVVVRPYPQVQMLPAHHAVASATPVAVTAPPAHLTPAVPLSFSEGLMKPPPKPTMPSRPIAPAPPSTMSLPPKVPGQVTVTMESSIPQASAIPVATISGQQGHPSNLHHIMTTNVQMSIIRSNAPGPPLHIGASHLPRGAAAAAVMSSSKVTTVLRPTSQLPNAATAQPAVQHLIHQPIQSRPPVTTSSTIPPAVVATVSATRAQSPVITTTAAHAADSTLSRPTLSIQHPPSAAISIQRPAQSRDVTTRITLPSHPALGTPKQQLHTMAQKTIFSTGTPVAAATVAPILATNTLPSTTTAGSVSHTQAPTSTIVTMTMPSHSSHATAVTTSNIPVAKVVPQQITHTSPRIQPDYPPERSSLIPISGHRASPNPVAMETRNDNRPSVPVQFQYFLPTYPPSAYPLAAHTYTPITSSVSTIRQYPVSAQAPNSTITAQTGVGVASTVHLNPMQLMTVDASHARHIQGIQPAPISTQGIQPAPIGTSGIQPAPIGTPGIHSAAPINTQGLQPAAMANQQPQPEGKTSAVVLADGATIVANPISNPFSAAPAATTVVQTHSQSASTNTPAQGSSPRPSILRKKPATDGMAVRKTLLPPQPPDVATPRVESSMRSASGSPRPAGAKPKSEVHVSIATPVTVSLETISNQNAEQPTVAVPPTAQQPPPTIPSMIAAASPPSQPAIALSTIPGAVPVTPPITTIAATPTLSAPVGGTPSTVLGPPVPEIKVKEEAEPVDITRPVSTVPPLATNTVSPSLALLASNLSMPPSDLPPGASPRKKPRKQQHVISTEEGDMMETNSTDDEKSAAKSLLVKAEKRKSPPKEYIDEEGVRYVPVRPRPPITLLRHYRNPWKAAYHHFQRYSDVRVKEEKKAMLQEIANQKGVSCRAQGWKVHLCAAQLLQLTNLEHDVYERLTNLQEGIIPKKKAATDDDLHRINELIQGNMQRCKLVMDQISEARDSMLKVLDHKDRVLKLLNKNGTVKKVSKLKRKEKV.

The segment at 1–69 (MSSQQFPRLG…LPPREEKQEP (69 aa)) is disordered. The span at 14 to 28 (PGLSQPPSQIASSGS) shows a compositional bias: polar residues. Residues 41–54 (EAGRDADVGTREHV) are compositionally biased toward basic and acidic residues. Residue R206 is modified to Omega-N-methylarginine. A Phosphothreonine modification is found at T329. Phosphoserine occurs at positions 416 and 439. Disordered stretches follow at residues 619–695 (TTVV…KSEV) and 718–740 (PTVAVPPTAQQPPPTIPSMIAAA). Over residues 620 to 641 (TVVQTHSQSASTNTPAQGSSPR) the composition is skewed to polar residues. K794 participates in a covalent cross-link: Glycyl lysine isopeptide (Lys-Gly) (interchain with G-Cter in SUMO2). Residues 827-873 (NLSMPPSDLPPGASPRKKPRKQQHVISTEEGDMMETNSTDDEKSAAK) are disordered. An interactions with SIN3A and HDAC1 region spans residues 845–1057 (PRKQQHVIST…VSKLKRKEKV (213 aa)). The residue at position 864 (S864) is a Phosphoserine. Position 865 is a phosphothreonine (T865). Glycyl lysine isopeptide (Lys-Gly) (interchain with G-Cter in SUMO2) cross-links involve residues K873 and K878. A Phosphoserine modification is found at S884.

Belongs to the SAP130 family. Component of a mSin3A corepressor complex that contains SIN3A, SAP130, SUDS3/SAP45, ARID4B/SAP180, HDAC1 and HDAC2. Interacts (released by dead or dying cells) with CLEC4E. Post-translationally, acetylated. In terms of processing, sumoylated with SUMO1.

The protein localises to the nucleus. Its function is as follows. Acts as a transcriptional repressor. May function in the assembly and/or enzymatic activity of the mSin3A corepressor complex or in mediating interactions between the complex and other regulatory complexes. This Mus musculus (Mouse) protein is Histone deacetylase complex subunit SAP130 (Sap130).